A 394-amino-acid polypeptide reads, in one-letter code: 4-O-methyl-glucuronoyl methylesterase (394 aa).

A signal peptide spans 1-18 (MVHLTPALLLASAAFAAA). 3 disulfides stabilise this stretch: Cys29-Cys63, Cys210-Cys345, and Cys242-Cys317. The GXSYXG catalytic site motif signature appears at 209-214 (GCSRNG). The active-site Nucleophile is Ser211. Residues Lys215, Gln257, Glu265, and Trp308 each contribute to the substrate site. His344 acts as the Proton donor/acceptor in catalysis.

This sequence belongs to the carbohydrate esterase 15 (CE15) family.

Its subcellular location is the secreted. It catalyses the reaction a 4-O-methyl-alpha-D-glucuronosyl ester derivative + H2O = 4-O-methyl-alpha-D-glucuronate derivative + an alcohol + H(+). Its function is as follows. Glucuronoyl esterase which may play a significant role in biomass degradation, as it is considered to disconnect hemicellulose from lignin through the hydrolysis of the ester bond between 4-O-methyl-D-glucuronic acid residues of glucuronoxylans and aromatic alcohols of lignin. The chain is 4-O-methyl-glucuronoyl methylesterase from Neurospora crassa (strain ATCC 24698 / 74-OR23-1A / CBS 708.71 / DSM 1257 / FGSC 987).